A 255-amino-acid chain; its full sequence is Malonyl-[acyl-carrier protein] O-methyltransferase (255 aa).

Belongs to the methyltransferase superfamily.

It carries out the reaction malonyl-[ACP] + S-adenosyl-L-methionine = malonyl-[ACP] methyl ester + S-adenosyl-L-homocysteine. The protein operates within cofactor biosynthesis; biotin biosynthesis. In terms of biological role, converts the free carboxyl group of a malonyl-thioester to its methyl ester by transfer of a methyl group from S-adenosyl-L-methionine (SAM). It allows to synthesize pimeloyl-ACP via the fatty acid synthetic pathway. The polypeptide is Malonyl-[acyl-carrier protein] O-methyltransferase (Porphyromonas gingivalis (strain ATCC BAA-308 / W83)).